Reading from the N-terminus, the 120-residue chain is Basic phospholipase A2 Cc2-PLA2 (120 aa).

Disulfide bonds link C26–C113, C28–C44, C43–C95, C49–C120, C50–C88, C57–C81, and C75–C86. Y27, G29, and G31 together coordinate Ca(2+). H47 is a catalytic residue. D48 contacts Ca(2+). D89 is a catalytic residue.

Belongs to the phospholipase A2 family. Group II subfamily. D49 sub-subfamily. Monomer. The cofactor is Ca(2+). As to expression, expressed by the venom gland.

The protein localises to the secreted. The enzyme catalyses a 1,2-diacyl-sn-glycero-3-phosphocholine + H2O = a 1-acyl-sn-glycero-3-phosphocholine + a fatty acid + H(+). Its function is as follows. Basic phospholipase A2 that inhibits ADP-, thrombin- and arachidonic acid-induced platelet aggregation. It also exhibits anticoagulant effects upon human plasma in vitro. It induces a high hemolytic activity reaching its maximum after 24 hours. It induces a marked elevation of plasmatic levels of interleukin-6 and -10, eosinophil peroxidase and complement lytic activities and it also provokes a drastic increase of lymphocytes, monocytes and neutrophils in peripheral blood accompanied by a rapid intense migration of neutrophils to the peritoneal cavity. PLA2 catalyzes the calcium-dependent hydrolysis of the 2-acyl groups in 3-sn-phosphoglycerides. This chain is Basic phospholipase A2 Cc2-PLA2, found in Cerastes cerastes (Horned desert viper).